The following is a 753-amino-acid chain: Translation initiation factor IF-2 (753 aa).

The tract at residues Met-1–Ala-166 is disordered. Composition is skewed to low complexity over residues Ser-19–Ala-43, Asn-71–Arg-81, and Thr-102–Arg-122. The span at Pro-133–Leu-146 shows a compositional bias: basic and acidic residues. The span at Thr-153–Arg-162 shows a compositional bias: low complexity. The tr-type G domain occupies Pro-249 to Arg-418. Residues Gly-258–Thr-265 are G1. Gly-258–Thr-265 contacts GTP. Residues Gly-283–His-287 form a G2 region. The interval Asp-304–Gly-307 is G3. GTP-binding positions include Asp-304–His-308 and Asn-358–Asp-361. Residues Asn-358–Asp-361 are G4. The tract at residues Ser-394–Arg-396 is G5.

It belongs to the TRAFAC class translation factor GTPase superfamily. Classic translation factor GTPase family. IF-2 subfamily.

It localises to the cytoplasm. One of the essential components for the initiation of protein synthesis. Protects formylmethionyl-tRNA from spontaneous hydrolysis and promotes its binding to the 30S ribosomal subunits. Also involved in the hydrolysis of GTP during the formation of the 70S ribosomal complex. This Chloroflexus aggregans (strain MD-66 / DSM 9485) protein is Translation initiation factor IF-2.